A 3078-amino-acid polypeptide reads, in one-letter code: MENQNIKYGDNDVAIIGIGLRLPNSINKPLELWEGLLAGFDGIVETTNRWSDSFSAMDEISSKYAGLIDLDEWMSFDPLFFGIIPTEVPSIDPQQRLLLKCTWEAFEDANIDPFKLRGTNTSVYVGASSLDYASINVDFDETPMNIFNSNMSGISNRISYCYDFRGTSLTIDTACSSSLNAVHLGYKSIINGESDYSIVGGCNFIMSPHTSRSFESINVTSKTGKSKAFDQDANGFVRSEGVVSIILKKMSKAIQDGDQIYSVIKGTNSNVDGNLNKGNFFAPSKQSQANNIKSAMESCNKETTNSTPIALNDIDFFELHGTSTQIGDPIECEGVSSVFKESREKPLLIGSIKANIGHLEPASGVASLAKVALMFKHRQFVKNINFDKPNPNIKFDEWKIKVCTENTPFPNNKKVSIAINSFGITGSNACLILTEYIKPKTTTTTTANNNGNQKYLIPISANSKSSLESYKEKLINSSKEFSETINFKDFVKYQLDSKTLKLTQRSVIIASNWEEAGSTQSIVTTNTNRSGNIIKDANKNPQLVFVFSGQGPQWSKMFTQLYDQEPIFKQKTDQIDSLLSKHYGYSILNKLNSIKDDDTVTINEPILAQPSVFMIQMALIELYKHWGILASISIGHSLGEVSSAVCSGMIDLETGCFIIYHRSRLQQQTVGSGRMLVASLNEQQFNQEFQQKYPSIEISCFNSPFSIVLAGKESELQEISNILKEKETFSIFLSTQSSFHSSSQEPIKDELLKQLKDIKSTKSNIPNFSTVTSNLFNDNDDDEVVQQPDEASSHNSTTTLFDSNYVYENVRKPVQFEKAIKNVFNYIEKKGLGSSVIFLEISASPVLGNYIREMIPQDSNYFFIEDQTISVLSSLNKKNKDQVLEIQTSISQLYCKGYNVNFNCSNQTKSLDFKNTGYKQLSDVLFKYSWDDESYWSVSPLISNYIKNGPATNHLGYRNERQPYQSFTSSIDIKKEPFEFLKGHSSRNRVIYPGCGYIDSILKAFPDQDLTIQSMEYKSAILLSSSMKTYLSTNIIPSGKNEYRVSFHYKDKKTNKWILSCSGRLSTTKHNDEVVKKVDIEKLKSKCNFVTIQKKELYETIKYKAQLTLEGKFQSIEEVSYGHNCCLSKVPLTTLSSYDNESFLNLCVIDAAFQPLGAVKENQEPMVFASIENLKFFSKNIPKSAEDREKYKFVYTYTQVKEKKCGSYFVSILTMLQDGTILFFSPLVVYTQLTPYKNQYIIESPNDNLYKICYQSKDSTLPHPLLLKDKFDQPRFETTDKQSQVIKKALSNCLFAIFKRNNNLFTKVEVKSQSIDYLIEKYCLIIDNDDDNDGIDDNSILVNGGVASIDDMVLASTTGKETTIVNNGKRSLAKLIFQILKSNVDLIDWNNIATYTKNISKQQLNIIQAIGNLIVTPLSVTNQVTESDLISKTQLDIINNRMKIKQYELISNTIATDLIKPIINNSILFRILEINSGFGYLSEMIINKINQLLIEFESSYEIEIEFTFTLNGTNQDDNKEISNSIKEKLTNLLISKSSISIIFKELNLNESFLEQKFNPSYYDLIVLTNLSTITNLNESIEFINSILYPNGHLIIIDTKNQSNFQDYEIFEQFLIFDNFGGGIVDDNIDWVKIFQDNNINRVVATPNIKPHVIQVQKSKLYEKVMGTLDDITGPYDQIIIIGYQLQGTDEDNFQSPIMDINKQGTDIYRIKTIEEFEKHCSTIPPTDKSILFFISAMNNLSLENYKQVNFDYIKINQYLLANKLGSLFILATKSALKESTNALAASLIGSFRYFSEFSNILNLYSFDFGEDVYTLSKEISLKWLNMAIDLLDPNKHIQREYIFRNGNETWFERIGKIKRVKSKYQSKSYLDDKEDSLVARLDQNLEYQLEAKQSNLKENEIEVQVVATGINFKDSLIFRNLVPPVLANHEGDFSKPEFGFECSGIVSRIGSKVKKFKVGDSVLGISWKSTSSHAINYQDAFVLKPDNISFVEAASIPIVYCTSFYSLFYSGNLSIKNNESVLIHQASGGIGLACLNILKSCGFKSKLYVTVGSKEKEDYLRETYGDFITGIYSSRNTDFLENIKTDLSNKNDNNNNNNNNNNDNKESNIKELLDNDDDEILPFIHKKGVDLIINTLPFEFLDTNFLLLGQGGRIVDLSVTHLNNNDTTDFSKFKWFIGYSTVEIFYNGFEKSKHILQLITDMIKNKELPLIPIKEYPINQIKDAIDFIGQRKHIGKIVINHKLGLRDGCSNLVQDTIKSLQNHLKDNYLVASPDFKFMGDSLGKTILLTGQTGLSLSIAQACLLNNYQDLEGIIVISKSPIKHELQYLISLAKYLSRKTRVHFKQADCSKFDEMRKVISEIYEKDDPKLSPVESIFHNAFVPVMSEPQDIDMKHIDDAYDAKTTGAMNLYMLMSMYDWKLKNFFFSSSITSVSGSSRQAGYCGANLVLESMAKVIQSQGIRCSTICWGIIGDTGYVSRNESVAKFLNGLGNAPMPLNMVLGSLDLLLQQPTLSTDTTIIASFDFNNLPKLSRDGSNNISYKFDYFTNPIQSNQNNCSSDDLSIREQILAKFSEFLSVDDQSKINLDIKLLDYGADSMVIVELKNYLDKTYTPNILSIQQLQNITINQLIQSVTDAMNKLNGNENKSIKKSNKLVQQKQIDWVKEIKLDSSIKPTDEMIKLFKQLQQQASTTTSNTVFLTGSSGFIGIYILFYLIKSVNCKIVYCLIRRKTIEEATTFLIEFLKVHQLYNQLTTDEINKIKPVLGDYTLDSFGLSVDQYTNISNNVDLIINSAASVNYQMGYEDSKVESVEGVLQCLRFSCHNKLKKLFQVSTLGIYSDDKRDNLDDYTFAQIDPKIIQSKNSIINGYLQGKIVSEYHIKEAANRGIPCCIIRLPFIGPNPNTGVGRDLDLFQTLFQSCYAMSTYPKQESGLQFYATPVTWAAQNLSFISLNPKCWSTSSNHPSSISENLTCYSLFGESICFNVLLTELATQLKWKPTSSGEFLKKLRSFPNEPSCKKLHIVLKNTKNLLLNVYIPGNYKLNPTLKQLLQSNNTYEGWKITPEMILTHLSFIFKKKLNK.

The region spanning 10 to 435 (DNDVAIIGIG…GSNACLILTE (426 aa)) is the Ketosynthase family 3 (KS3) domain. Catalysis depends on for beta-ketoacyl synthase activity residues Cys175, His320, and His358. The interval 627-660 (GILASISIGHSLGEVSSAVCSGMIDLETGCFIIY) is acyl/malonyl transferase. The active-site For acyl/malonyl transferase activity is the Ser637. Residues 952–1072 (TNHLGYRNER…GRLSTTKHND (121 aa)) form an N-terminal hotdog fold region. One can recognise a PKS/mFAS DH domain in the interval 952-1239 (TNHLGYRNER…YTQLTPYKNQ (288 aa)). Catalysis depends on His984, which acts as the Proton acceptor; for dehydratase activity. The segment at 1088 to 1239 (NFVTIQKKEL…YTQLTPYKNQ (152 aa)) is C-terminal hotdog fold. Asp1150 acts as the Proton donor; for dehydratase activity in catalysis. Positions 2080-2119 (LENIKTDLSNKNDNNNNNNNNNNDNKESNIKELLDNDDDE) form a coiled coil. The interval 2087–2108 (LSNKNDNNNNNNNNNNDNKESN) is disordered. Residues 2090 to 2102 (KNDNNNNNNNNNN) show a composition bias toward low complexity. A Carrier domain is found at 2558–2636 (SDDLSIREQI…QLIQSVTDAM (79 aa)). The residue at position 2596 (Ser2596) is an O-(pantetheine 4'-phosphoryl)serine. Residues 2694–2714 (NTVFLTGSSGFIGIYILFYLI) traverse the membrane as a helical segment.

Pantetheine 4'-phosphate is required as a cofactor.

It localises to the membrane. Probable polyketide synthase. The polypeptide is Probable polyketide synthase 44 (pks44) (Dictyostelium discoideum (Social amoeba)).